The primary structure comprises 230 residues: Probable septum site-determining protein MinC (230 aa).

Belongs to the MinC family. In terms of assembly, interacts with MinD and FtsZ.

In terms of biological role, cell division inhibitor that blocks the formation of polar Z ring septums. Rapidly oscillates between the poles of the cell to destabilize FtsZ filaments that have formed before they mature into polar Z rings. Prevents FtsZ polymerization. The protein is Probable septum site-determining protein MinC of Rhodopseudomonas palustris (strain BisA53).